A 125-amino-acid chain; its full sequence is Putative RNA polymerase sigma-G factor (125 aa).

The protein belongs to the sigma-70 factor family.

Functionally, sigma factors are initiation factors that promote the attachment of RNA polymerase to specific initiation sites and are then released. The polypeptide is Putative RNA polymerase sigma-G factor (Bacillus thuringiensis subsp. kurstaki).